The sequence spans 699 residues: Ecdysone-inducible protein E75 (699 aa).

The segment at 1–31 (MTLVMSPDSSYGRYDAPTPTDVTSPVHRERE) is disordered. The segment at residues 42–118 (TVLCRVCGDK…VGMSRDAVRF (77 aa)) is a DNA-binding region (nuclear receptor). 2 consecutive NR C4-type zinc fingers follow at residues 45–65 (CRVC…CEGC) and 82–106 (CTKN…LKKC). In terms of domain architecture, NR LBD spans 152 to 399 (DAPRLLARVV…QQMWSEEEAV (248 aa)). Disordered stretches follow at residues 466 to 528 (TVTP…DDMP), 561 to 607 (RRDT…STHS), and 679 to 699 (LNLS…MLEA). Basic and acidic residues-rich tracts occupy residues 510–520 (SLEEHNEDRRP) and 561–571 (RRDTGEAEART). Residues 575-588 (TPSPQPQHPHPANP) are compositionally biased toward pro residues.

Belongs to the nuclear hormone receptor family. NR1 subfamily.

It is found in the nucleus. Functionally, implicated in the regulation of ecdysone-triggered gene hierarchies. Probably plays a key role in mediating the regulation of the larval molt by 20-OH-ecdysone. The sequence is that of Ecdysone-inducible protein E75 (E75) from Manduca sexta (Tobacco hawkmoth).